We begin with the raw amino-acid sequence, 201 residues long: Molybdenum cofactor guanylyltransferase (201 aa).

GTP contacts are provided by residues 14–16 (LAG), Lys-31, and Asp-104. Asp-104 lines the Mg(2+) pocket.

Belongs to the MobA family. As to quaternary structure, monomer. Mg(2+) serves as cofactor.

Its subcellular location is the cytoplasm. The enzyme catalyses Mo-molybdopterin + GTP + H(+) = Mo-molybdopterin guanine dinucleotide + diphosphate. Its function is as follows. Transfers a GMP moiety from GTP to Mo-molybdopterin (Mo-MPT) cofactor (Moco or molybdenum cofactor) to form Mo-molybdopterin guanine dinucleotide (Mo-MGD) cofactor. The chain is Molybdenum cofactor guanylyltransferase from Helicobacter pylori (strain ATCC 700392 / 26695) (Campylobacter pylori).